We begin with the raw amino-acid sequence, 315 residues long: MNGSRIAAVGHYQPAKVLTNEDLASLVDTSDEWIRSRVGIRTRHFAGPDEPVDELAGHAAAKALASAGLAPADIDLVLVATSTAEDRSPNMAARVAARLGIPSPAAMDINVVCAGFTHALATADHAVRAGAATRALVIGADKMSAVTDWSDRTTCVLVGDGAGAAVVDACPEGAEPGIGPVLWGSVPEMGHAVRIEGTPPRFAQEGQSVYRWATTQLPAIARRACERAGLTPADLAGVVLHQANLRIIEPLAAKIGAVNAVVARDVVESGNTSAASIPLAFSKLVERGEISTGDPVLLFGFGGNLSYAGQVIRCP.

Residues cysteine 113 and histidine 241 contribute to the active site. The interval 242 to 246 is ACP-binding; sequence QANLR. Residue asparagine 271 is part of the active site.

Belongs to the thiolase-like superfamily. FabH family. As to quaternary structure, homodimer.

It localises to the cytoplasm. The enzyme catalyses malonyl-[ACP] + acetyl-CoA + H(+) = 3-oxobutanoyl-[ACP] + CO2 + CoA. Its pathway is lipid metabolism; fatty acid biosynthesis. In terms of biological role, catalyzes the condensation reaction of fatty acid synthesis by the addition to an acyl acceptor of two carbons from malonyl-ACP. Catalyzes the first condensation reaction which initiates fatty acid synthesis and may therefore play a role in governing the total rate of fatty acid production. Possesses both acetoacetyl-ACP synthase and acetyl transacylase activities. Its substrate specificity determines the biosynthesis of branched-chain and/or straight-chain of fatty acids. This Streptomyces avermitilis (strain ATCC 31267 / DSM 46492 / JCM 5070 / NBRC 14893 / NCIMB 12804 / NRRL 8165 / MA-4680) protein is Beta-ketoacyl-[acyl-carrier-protein] synthase III 2.